A 206-amino-acid chain; its full sequence is Protein YOP1 (206 aa).

Over methionine 1–proline 52 the chain is Cytoplasmic. A helical membrane pass occupies residues lysine 53–methionine 72. The Lumenal segment spans residues phenylalanine 73–glycine 74. Residues leucine 75 to alanine 95 traverse the membrane as a helical segment. Over isoleucine 96–lysine 105 the chain is Cytoplasmic. Residues glutamine 106–serine 122 traverse the membrane as a helical segment. The Lumenal segment spans residues methionine 123–arginine 126. A helical membrane pass occupies residues alanine 127 to tryptophan 145. Residues leucine 146–leucine 206 lie on the Cytoplasmic side of the membrane. The tract at residues phenylalanine 177 to leucine 206 is disordered.

Belongs to the DP1 family. In terms of assembly, oligomer.

The protein localises to the endoplasmic reticulum membrane. It is found in the golgi apparatus membrane. Required to generate and maintain the structure of the tubular endoplasmic reticulum network and the vacuole. Induces high curvature in membranes and causes membrane tubule formation. Involved in membrane/vesicle trafficking. The chain is Protein YOP1 (YOP1) from Cryptococcus neoformans var. neoformans serotype D (strain B-3501A) (Filobasidiella neoformans).